A 368-amino-acid chain; its full sequence is Dihydroorotate dehydrogenase (quinone) (368 aa).

FMN is bound by residues 67 to 71 (AGFDK) and Thr91. A substrate-binding site is contributed by Lys71. 116-120 (NRMGF) lines the substrate pocket. 2 residues coordinate FMN: Asn146 and Asn179. A substrate-binding site is contributed by Asn179. Ser182 serves as the catalytic Nucleophile. Asn184 contacts substrate. Positions 222 and 250 each coordinate FMN. Position 251–252 (251–252 (NT)) interacts with substrate. Residues Gly276, Gly305, and 326–327 (YS) contribute to the FMN site.

It belongs to the dihydroorotate dehydrogenase family. Type 2 subfamily. In terms of assembly, monomer. The cofactor is FMN.

It localises to the cell membrane. It catalyses the reaction (S)-dihydroorotate + a quinone = orotate + a quinol. It functions in the pathway pyrimidine metabolism; UMP biosynthesis via de novo pathway; orotate from (S)-dihydroorotate (quinone route): step 1/1. In terms of biological role, catalyzes the conversion of dihydroorotate to orotate with quinone as electron acceptor. This chain is Dihydroorotate dehydrogenase (quinone), found in Streptomyces coelicolor (strain ATCC BAA-471 / A3(2) / M145).